Reading from the N-terminus, the 549-residue chain is MAELTISANDIQSAIEEYVGSFTSDTSREEVGTVVDAGDGIAHVEGLPSVMTQELLEFPGGVLGVALNLDEHSVGAVILGNFENIEEGQQVKRTGEVLSVPVGDAFLGRVINPLGQPIDGRGDIEAETRRALELQAPSVVQRQSVKEPLQTGIKAIDAMTPIGRGQRQLIIGDRKTGKTAVCVDTILNQRQNWETGDPKKQVRCVYVAVGQKGTTIASVRRALEEGGAMDYTTIVAAPASDSAGFKWLAPYTGSAVAQHWMYDGKHVLIVFDDLTKQAEAYRAISLLLRRPPGREAYPGDVFYLHSRLLERCAKLSDELGGGSLTGLPIIETKANDISAYIPTNVISITDGQCFLETDLFNQGVRPAINVGVSVSRVGGAAQIKAMKEVAGSLRLDLSQYRELEAFAAFASDLDATSKAQLDRGARLVELLKQPQYQPMPVEEQVISIFLGTGGHLDSVPVEDVRRFETELLDHIRASEENLLSTIRDTQKLTEETEEALTKVINHFKKGFASSTGESVVPDEHVEAMDEEDLGKESVKVKKPAPQKKK.

172-179 (GDRKTGKT) contributes to the ATP binding site. Residues 513-549 (SSTGESVVPDEHVEAMDEEDLGKESVKVKKPAPQKKK) form a disordered region. Residues 540-549 (VKKPAPQKKK) show a composition bias toward basic residues.

This sequence belongs to the ATPase alpha/beta chains family. As to quaternary structure, F-type ATPases have 2 components, CF(1) - the catalytic core - and CF(0) - the membrane proton channel. CF(1) has five subunits: alpha(3), beta(3), gamma(1), delta(1), epsilon(1). CF(0) has three main subunits: a(1), b(2) and c(9-12). The alpha and beta chains form an alternating ring which encloses part of the gamma chain. CF(1) is attached to CF(0) by a central stalk formed by the gamma and epsilon chains, while a peripheral stalk is formed by the delta and b chains.

Its subcellular location is the cell membrane. It catalyses the reaction ATP + H2O + 4 H(+)(in) = ADP + phosphate + 5 H(+)(out). In terms of biological role, produces ATP from ADP in the presence of a proton gradient across the membrane. The alpha chain is a regulatory subunit. The chain is ATP synthase subunit alpha from Mycobacterium marinum (strain ATCC BAA-535 / M).